We begin with the raw amino-acid sequence, 99 residues long: MTEETITIDSISNGILNNLLTTLIQDIVARETTQQQLLKTRYPDLRSYYFYPNGSLDINGLQKQQESSQYIHCENCGRDVSANRLAAHLQRCLSRGARR.

The SGF11-type zinc-finger motif lies at 71–92; sequence IHCENCGRDVSANRLAAHLQRC.

This sequence belongs to the SGF11 family. In terms of assembly, component of the 1.8 MDa SAGA transcription coactivator-HAT complex. SAGA is built of 5 distinct domains with specialized functions. Within the SAGA complex, SUS1, SGF11, SGF73 and UBP8 form an additional subcomplex of SAGA called the DUB module (deubiquitination module). Interacts directly with SGF73, SUS1 and UBP8.

The protein resides in the nucleus. Functionally, functions as a component of the transcription regulatory histone acetylation (HAT) complex SAGA. At the promoters, SAGA is required for recruitment of the basal transcription machinery. It influences RNA polymerase II transcriptional activity through different activities such as TBP interaction and promoter selectivity, interaction with transcription activators, and chromatin modification through histone acetylation and deubiquitination. SAGA acetylates nucleosomal histone H3 to some extent (to form H3K9ac, H3K14ac, H3K18ac and H3K23ac). SAGA interacts with DNA via upstream activating sequences (UASs). Involved in transcriptional regulation of a subset of SAGA-regulated genes. Within the SAGA complex, participates in a subcomplex, that specifically deubiquitinates histones H2B. This chain is SAGA-associated factor 11, found in Saccharomyces cerevisiae (strain RM11-1a) (Baker's yeast).